A 181-amino-acid polypeptide reads, in one-letter code: UPF0302 protein lmo1921 (181 aa).

It belongs to the UPF0302 family.

In Listeria monocytogenes serovar 1/2a (strain ATCC BAA-679 / EGD-e), this protein is UPF0302 protein lmo1921.